The following is a 406-amino-acid chain: Exodeoxyribonuclease 7 large subunit (406 aa).

This sequence belongs to the XseA family. Heterooligomer composed of large and small subunits.

The protein resides in the cytoplasm. The catalysed reaction is Exonucleolytic cleavage in either 5'- to 3'- or 3'- to 5'-direction to yield nucleoside 5'-phosphates.. Bidirectionally degrades single-stranded DNA into large acid-insoluble oligonucleotides, which are then degraded further into small acid-soluble oligonucleotides. The chain is Exodeoxyribonuclease 7 large subunit from Desulfitobacterium hafniense (strain Y51).